The sequence spans 170 residues: tRNA-splicing endonuclease (170 aa).

Active-site residues include Y110, H116, and K147.

This sequence belongs to the tRNA-intron endonuclease family. Archaeal short subfamily. As to quaternary structure, homotetramer; although the tetramer contains four active sites, only two participate in the cleavage. Therefore, it should be considered as a dimer of dimers.

The enzyme catalyses pretRNA = a 3'-half-tRNA molecule with a 5'-OH end + a 5'-half-tRNA molecule with a 2',3'-cyclic phosphate end + an intron with a 2',3'-cyclic phosphate and a 5'-hydroxyl terminus.. Endonuclease that removes tRNA introns. Cleaves pre-tRNA at the 5'- and 3'-splice sites to release the intron. The products are an intron and two tRNA half-molecules bearing 2',3' cyclic phosphate and 5'-OH termini. Recognizes a pseudosymmetric substrate in which 2 bulged loops of 3 bases are separated by a stem of 4 bp. The chain is tRNA-splicing endonuclease from Pyrococcus horikoshii (strain ATCC 700860 / DSM 12428 / JCM 9974 / NBRC 100139 / OT-3).